Reading from the N-terminus, the 810-residue chain is Cell division control protein 48 homolog E (810 aa).

An N-acetylserine modification is found at Ser2. Ser41 is modified (phosphoserine). Residues 248-255 and 521-528 contribute to the ATP site; these read GPPGSGKT and GPPGCGKT.

The protein belongs to the AAA ATPase family.

It localises to the nucleus. The protein localises to the cytoplasm. Its subcellular location is the cytoskeleton. It is found in the phragmoplast. Functionally, probably functions in cell division and growth processes. Interacts with certain SNAREs as part of specialized membrane fusion events where vesicles from the same organelle fuse (homotypic fusion). The chain is Cell division control protein 48 homolog E (CDC48E) from Arabidopsis thaliana (Mouse-ear cress).